A 171-amino-acid chain; its full sequence is MSKIGLFVGTTTGKTEEAAEKIKEEFGGDDVVTIHDISEASPEDFDGYQNVIIGCPTWDVGELQSDWSGFYSEELDNVKFTGKKVAYFGTGDQIGYADNFQDAMGILEEKITGLGGTTIGSWSTEGYDHEDSKAVKNGKFVGLALDDDNQADLTDERIKEWVKQLKTEFGV.

Positions 4–166 (IGLFVGTTTG…RIKEWVKQLK (163 aa)) constitute a Flavodoxin-like domain.

This sequence belongs to the flavodoxin family. Requires FMN as cofactor.

Low-potential electron donor to a number of redox enzymes. This is Flavodoxin (fld) from Trichodesmium erythraeum (strain IMS101).